The sequence spans 554 residues: Hydroxylamine reductase (554 aa).

[2Fe-2S] cluster contacts are provided by C3, C6, C18, and C25. H252, E276, C320, C408, C436, C461, E495, and K497 together coordinate hybrid [4Fe-2O-2S] cluster. C408 is subject to Cysteine persulfide.

This sequence belongs to the HCP family. [2Fe-2S] cluster serves as cofactor. Hybrid [4Fe-2O-2S] cluster is required as a cofactor.

The protein localises to the cytoplasm. The catalysed reaction is A + NH4(+) + H2O = hydroxylamine + AH2 + H(+). Functionally, catalyzes the reduction of hydroxylamine to form NH(3) and H(2)O. The protein is Hydroxylamine reductase of Shewanella loihica (strain ATCC BAA-1088 / PV-4).